A 468-amino-acid polypeptide reads, in one-letter code: Malate-2H(+)/Na(+)-lactate antiporter (468 aa).

The next 12 helical transmembrane spans lie at L9 to F29, L30 to I50, A73 to V93, L96 to I116, I136 to I156, L192 to M212, T233 to M253, M258 to M278, I309 to L329, L357 to T377, L405 to V425, and F428 to G448.

This sequence belongs to the NhaC Na(+)/H(+) (TC 2.A.35) antiporter family.

The protein resides in the cell membrane. Its function is as follows. Couples proton uptake and Na(+) efflux to the substrate-product malate/lactate antiport, in an electroneutral malate-2H(+)/Na(+)-lactate exchange. Plays a role in supporting growth to high density on malate at reduced protonmotive force. In Bacillus subtilis (strain 168), this protein is Malate-2H(+)/Na(+)-lactate antiporter (mleN).